Here is a 72-residue protein sequence, read N- to C-terminus: Toxin Acra II-1 (72 aa).

The LCN-type CS-alpha/beta domain maps to 3–67 (VPGNYPLNTY…VWNAAKNYCK (65 aa)). 3 cysteine pairs are disulfide-bonded: Cys-18–Cys-41, Cys-27–Cys-46, and Cys-31–Cys-48.

This sequence belongs to the long (3 C-C) scorpion toxin superfamily. Sodium channel inhibitor family. Beta subfamily. In terms of tissue distribution, expressed by the venom gland.

The protein localises to the secreted. Its function is as follows. Binds to sodium channels (Nav) and affects the channel activation process. The protein is Toxin Acra II-1 of Androctonus crassicauda (Arabian fat-tailed scorpion).